Here is a 97-residue protein sequence, read N- to C-terminus: ESAT-6-like protein EsxG (97 aa).

It belongs to the WXG100 family. CFP-10 subfamily. As to quaternary structure, forms a tight 1:1 complex with EsxH.

It localises to the secreted. The polypeptide is ESAT-6-like protein EsxG (Mycolicibacterium smegmatis (strain ATCC 700084 / mc(2)155) (Mycobacterium smegmatis)).